Reading from the N-terminus, the 267-residue chain is Putative carboxymethylenebutenolidase (267 aa).

Active-site residues include Cys-137, Asp-194, and His-226.

It belongs to the dienelactone hydrolase family.

The catalysed reaction is 2-(5-oxo-2,5-dihydrofuran-2-ylidene)acetate + H2O = 4-oxohex-2-enedioate + H(+). This chain is Putative carboxymethylenebutenolidase, found in Yersinia pestis.